The following is a 150-amino-acid chain: UPF0178 protein Bcep18194_A4809 (150 aa).

It belongs to the UPF0178 family.

The chain is UPF0178 protein Bcep18194_A4809 from Burkholderia lata (strain ATCC 17760 / DSM 23089 / LMG 22485 / NCIMB 9086 / R18194 / 383).